Here is a 589-residue protein sequence, read N- to C-terminus: C-type lectin domain family 4 member F (589 aa).

The Cytoplasmic portion of the chain corresponds to 1 to 39 (MDGEAVRFCTDNQCVSLHPQEVDSVAMAPAAPKIPRLVQ). Residues 40–60 (ATPAFMAVTLVFSLVTLFVVV) traverse the membrane as a helical; Signal-anchor for type II membrane protein segment. Topologically, residues 61 to 589 (QQQTRPVPKP…TPPCPWILSN (529 aa)) are extracellular. N-linked (GlcNAc...) asparagine glycans are attached at residues N79, N113, N207, N230, N244, N312, N385, and N399. The C-type lectin domain maps to 476–589 (NGGSLYYFSS…TPPCPWILSN (114 aa)).

Its subcellular location is the membrane. Its function is as follows. Receptor with an affinity for galactose and fucose. Could be involved in endocytosis. This Homo sapiens (Human) protein is C-type lectin domain family 4 member F (CLEC4F).